The primary structure comprises 264 residues: uncharacterized protein (264 aa).

Polar residues-rich tracts occupy residues Met1–Ser18, Ser73–Asn83, and Lys126–Leu139. 2 disordered regions span residues Met1–Ser47 and Arg68–Glu264. The segment covering Ser149–Ala171 has biased composition (low complexity). Residues Leu194 to Arg212 are compositionally biased toward basic and acidic residues. 4 positions are modified to phosphoserine: Ser214, Ser215, Ser241, and Ser250.

This is an uncharacterized protein from Bos taurus (Bovine).